A 161-amino-acid chain; its full sequence is Ribosome maturation factor RimP (161 aa).

The protein belongs to the RimP family.

The protein resides in the cytoplasm. Required for maturation of 30S ribosomal subunits. The protein is Ribosome maturation factor RimP of Myxococcus xanthus (strain DK1622).